Consider the following 93-residue polypeptide: Small ribosomal subunit protein uS19 (93 aa).

It belongs to the universal ribosomal protein uS19 family.

In terms of biological role, protein S19 forms a complex with S13 that binds strongly to the 16S ribosomal RNA. The protein is Small ribosomal subunit protein uS19 of Mycobacterium sp. (strain JLS).